The chain runs to 234 residues: Glucosamine-6-phosphate deaminase (234 aa).

The active-site Proton acceptor; for enolization step is Asp-62. The For ring-opening step role is filled by Asn-128. His-130 acts as the Proton acceptor; for ring-opening step in catalysis. The For ring-opening step role is filled by Glu-135.

The protein belongs to the glucosamine/galactosamine-6-phosphate isomerase family. NagB subfamily.

It carries out the reaction alpha-D-glucosamine 6-phosphate + H2O = beta-D-fructose 6-phosphate + NH4(+). It participates in amino-sugar metabolism; N-acetylneuraminate degradation; D-fructose 6-phosphate from N-acetylneuraminate: step 5/5. In terms of biological role, catalyzes the reversible isomerization-deamination of glucosamine 6-phosphate (GlcN6P) to form fructose 6-phosphate (Fru6P) and ammonium ion. The protein is Glucosamine-6-phosphate deaminase of Streptococcus equi subsp. zooepidemicus (strain MGCS10565).